Consider the following 494-residue polypeptide: Glutamyl-tRNA(Gln) amidotransferase subunit A (494 aa).

Catalysis depends on charge relay system residues Lys-88 and Ser-163. Residue Ser-187 is the Acyl-ester intermediate of the active site.

The protein belongs to the amidase family. GatA subfamily. In terms of assembly, heterotrimer of A, B and C subunits.

It carries out the reaction L-glutamyl-tRNA(Gln) + L-glutamine + ATP + H2O = L-glutaminyl-tRNA(Gln) + L-glutamate + ADP + phosphate + H(+). Functionally, allows the formation of correctly charged Gln-tRNA(Gln) through the transamidation of misacylated Glu-tRNA(Gln) in organisms which lack glutaminyl-tRNA synthetase. The reaction takes place in the presence of glutamine and ATP through an activated gamma-phospho-Glu-tRNA(Gln). In Corynebacterium diphtheriae (strain ATCC 700971 / NCTC 13129 / Biotype gravis), this protein is Glutamyl-tRNA(Gln) amidotransferase subunit A.